We begin with the raw amino-acid sequence, 860 residues long: Leucine--tRNA ligase (860 aa).

Residues Pro42–His52 carry the 'HIGH' region motif. Residues Lys619 to Ser623 carry the 'KMSKS' region motif. ATP is bound at residue Lys622.

The protein belongs to the class-I aminoacyl-tRNA synthetase family.

Its subcellular location is the cytoplasm. It catalyses the reaction tRNA(Leu) + L-leucine + ATP = L-leucyl-tRNA(Leu) + AMP + diphosphate. The polypeptide is Leucine--tRNA ligase (Escherichia coli O9:H4 (strain HS)).